A 270-amino-acid polypeptide reads, in one-letter code: Formamidopyrimidine-DNA glycosylase (270 aa).

Proline 2 functions as the Schiff-base intermediate with DNA in the catalytic mechanism. The active-site Proton donor is the glutamate 3. The Proton donor; for beta-elimination activity role is filled by lysine 58. The DNA site is built by histidine 91, arginine 109, and arginine 151. Residues glutamine 236–serine 270 form an FPG-type zinc finger. The active-site Proton donor; for delta-elimination activity is arginine 260.

The protein belongs to the FPG family. Monomer. Zn(2+) is required as a cofactor.

The enzyme catalyses Hydrolysis of DNA containing ring-opened 7-methylguanine residues, releasing 2,6-diamino-4-hydroxy-5-(N-methyl)formamidopyrimidine.. It catalyses the reaction 2'-deoxyribonucleotide-(2'-deoxyribose 5'-phosphate)-2'-deoxyribonucleotide-DNA = a 3'-end 2'-deoxyribonucleotide-(2,3-dehydro-2,3-deoxyribose 5'-phosphate)-DNA + a 5'-end 5'-phospho-2'-deoxyribonucleoside-DNA + H(+). Functionally, involved in base excision repair of DNA damaged by oxidation or by mutagenic agents. Acts as a DNA glycosylase that recognizes and removes damaged bases. Has a preference for oxidized purines, such as 7,8-dihydro-8-oxoguanine (8-oxoG). Has AP (apurinic/apyrimidinic) lyase activity and introduces nicks in the DNA strand. Cleaves the DNA backbone by beta-delta elimination to generate a single-strand break at the site of the removed base with both 3'- and 5'-phosphates. The sequence is that of Formamidopyrimidine-DNA glycosylase from Psychromonas ingrahamii (strain DSM 17664 / CCUG 51855 / 37).